The following is a 398-amino-acid chain: NADH-quinone oxidoreductase subunit D (398 aa).

The protein belongs to the complex I 49 kDa subunit family. In terms of assembly, NDH-1 is composed of 14 different subunits. Subunits NuoB, C, D, E, F, and G constitute the peripheral sector of the complex.

Its subcellular location is the cell inner membrane. It catalyses the reaction a quinone + NADH + 5 H(+)(in) = a quinol + NAD(+) + 4 H(+)(out). Functionally, NDH-1 shuttles electrons from NADH, via FMN and iron-sulfur (Fe-S) centers, to quinones in the respiratory chain. The immediate electron acceptor for the enzyme in this species is believed to be ubiquinone. Couples the redox reaction to proton translocation (for every two electrons transferred, four hydrogen ions are translocated across the cytoplasmic membrane), and thus conserves the redox energy in a proton gradient. The chain is NADH-quinone oxidoreductase subunit D from Bradyrhizobium sp. (strain BTAi1 / ATCC BAA-1182).